The chain runs to 603 residues: Translation initiation factor IF-2 (603 aa).

The 168-residue stretch at 112–279 folds into the tr-type G domain; that stretch reads TRPPIITIMG…NINLQAEILD (168 aa). The interval 121–128 is G1; sequence GHVDHGKT. GTP is bound at residue 121–128; that stretch reads GHVDHGKT. The G2 stretch occupies residues 146–150; that stretch reads GITQH. The segment at 167–170 is G3; sequence DTPG. Residues 167–171 and 221–224 contribute to the GTP site; these read DTPGH and NKMD. Positions 221–224 are G4; sequence NKMD. A G5 region spans residues 257–259; that stretch reads SAL.

The protein belongs to the TRAFAC class translation factor GTPase superfamily. Classic translation factor GTPase family. IF-2 subfamily.

It is found in the cytoplasm. In terms of biological role, one of the essential components for the initiation of protein synthesis. Protects formylmethionyl-tRNA from spontaneous hydrolysis and promotes its binding to the 30S ribosomal subunits. Also involved in the hydrolysis of GTP during the formation of the 70S ribosomal complex. This chain is Translation initiation factor IF-2, found in Mycoplasmopsis pulmonis (strain UAB CTIP) (Mycoplasma pulmonis).